The chain runs to 318 residues: sn-1 stearoyl-lipid 9-desaturase (318 aa).

Transmembrane regions (helical) follow at residues 56–76 (VIFF…PQFF) and 80–100 (AVGM…TLGF). Residues 101 to 106 (HRCISH) carry the Histidine box-1 motif. A helical transmembrane segment spans residues 117 to 137 (YIFVICGTLACQGGVFEWVGL). Residues 138-142 (HRMHH) carry the Histidine box-2 motif. The chain crosses the membrane as a helical span at residues 201–221 (VALGLILFALGGWPFVIWGIF). Positions 271–275 (HHAYQ) match the Histidine box-3 motif.

The protein belongs to the fatty acid desaturase type 2 family. Fe(2+) serves as cofactor.

It localises to the cellular thylakoid membrane. The enzyme catalyses a 1-octadecanoyl 2-acyl-glycerolipid + 2 reduced [2Fe-2S]-[ferredoxin] + O2 + 2 H(+) = a 1-[(9Z)-octadecenoyl]-2-acyl-glycerolipid + 2 oxidized [2Fe-2S]-[ferredoxin] + 2 H2O. It participates in lipid metabolism; polyunsaturated fatty acid biosynthesis. In terms of biological role, desaturase involved in fatty acid biosynthesis. Introduces a double bond at carbon 9 of stearoyl groups (18:0) attached to the sn-1 position of the glycerol moiety of membrane glycerolipids. Does not desaturate palmitic acid (16:0), palmitoleic acid (16:1) and cis-vaccenic acid (18:1). This chain is sn-1 stearoyl-lipid 9-desaturase, found in Synechocystis sp. (strain ATCC 27184 / PCC 6803 / Kazusa).